Here is a 568-residue protein sequence, read N- to C-terminus: T-complex protein 1 subunit theta (568 aa).

Residue K15 forms a Glycyl lysine isopeptide (Lys-Gly) (interchain with G-Cter in ubiquitin) linkage. At S505 the chain carries Phosphoserine.

This sequence belongs to the TCP-1 chaperonin family. Heterooligomeric complex of about 850 to 900 kDa that forms two stacked rings, 12 to 16 nm in diameter.

It is found in the cytoplasm. Its function is as follows. Molecular chaperone; assists the folding of proteins upon ATP hydrolysis. Known to play a role, in vitro, in the folding of actin and tubulin. In yeast may play a role in mitotic spindle formation. This chain is T-complex protein 1 subunit theta (CCT8), found in Saccharomyces cerevisiae (strain ATCC 204508 / S288c) (Baker's yeast).